The following is a 302-amino-acid chain: Aspartate carbamoyltransferase catalytic subunit (302 aa).

Residues Arg-53 and Thr-54 each coordinate carbamoyl phosphate. Lys-82 lines the L-aspartate pocket. Arg-103, His-131, and Gln-134 together coordinate carbamoyl phosphate. L-aspartate is bound by residues Arg-164 and Arg-223. Residues Leu-260 and Pro-261 each coordinate carbamoyl phosphate.

It belongs to the aspartate/ornithine carbamoyltransferase superfamily. ATCase family. In terms of assembly, heterooligomer of catalytic and regulatory chains.

It carries out the reaction carbamoyl phosphate + L-aspartate = N-carbamoyl-L-aspartate + phosphate + H(+). It functions in the pathway pyrimidine metabolism; UMP biosynthesis via de novo pathway; (S)-dihydroorotate from bicarbonate: step 2/3. Catalyzes the condensation of carbamoyl phosphate and aspartate to form carbamoyl aspartate and inorganic phosphate, the committed step in the de novo pyrimidine nucleotide biosynthesis pathway. The chain is Aspartate carbamoyltransferase catalytic subunit from Methanococcus maripaludis (strain DSM 14266 / JCM 13030 / NBRC 101832 / S2 / LL).